A 520-amino-acid chain; its full sequence is 6-phosphofructo-2-kinase/fructose-2,6-bisphosphatase 3 (520 aa).

The tract at residues 1 to 245 (MPLELTQSRV…VYYLMNIHVQ (245 aa)) is 6-phosphofructo-2-kinase. 42–50 (GLPARGKTY) provides a ligand contact to ATP. Beta-D-fructose 6-phosphate contacts are provided by Arg75 and Arg99. The active site involves Asp125. Beta-D-fructose 6-phosphate-binding residues include Thr127 and Arg133. Cys155 is a catalytic residue. 164–169 (NIMEVK) is an ATP binding site. Positions 169, 190, and 194 each coordinate beta-D-fructose 6-phosphate. Positions 246-520 (PRTIYLCRHG…RSSADSSRKH (275 aa)) are fructose-2,6-bisphosphatase. Arg253 provides a ligand contact to beta-D-fructose 2,6-bisphosphate. Catalysis depends on His254, which acts as the Tele-phosphohistidine intermediate. Beta-D-fructose 2,6-bisphosphate is bound by residues Asn260 and Gly266. Residue Glu323 is the Proton donor/acceptor of the active site. Residues Tyr334, Arg348, Lys352, Tyr363, Gln389, and Arg393 each coordinate beta-D-fructose 2,6-bisphosphate. An ATP-binding site is contributed by 345 to 348 (YALR). Residues 389 to 393 (QAVLR) and Tyr425 contribute to the ATP site. Positions 443-520 (RERSEDAKKG…RSSADSSRKH (78 aa)) are disordered. At Ser461 the chain carries Phosphoserine; by AMPK. Thr463 is subject to Phosphothreonine. Ser467 carries the post-translational modification Phosphoserine. Thr471 bears the Phosphothreonine; by PKC mark. A compositionally biased stretch (polar residues) spans 502 to 520 (LPGQNMKGSRSSADSSRKH).

The protein in the C-terminal section; belongs to the phosphoglycerate mutase family. Homodimer. Forms a heterodimer with PFKFB2. Post-translationally, phosphorylation by AMPK stimulates activity. As to expression, ubiquitous.

It carries out the reaction beta-D-fructose 2,6-bisphosphate + H2O = beta-D-fructose 6-phosphate + phosphate. The enzyme catalyses beta-D-fructose 6-phosphate + ATP = beta-D-fructose 2,6-bisphosphate + ADP + H(+). Functionally, catalyzes both the synthesis and degradation of fructose 2,6-bisphosphate. The polypeptide is 6-phosphofructo-2-kinase/fructose-2,6-bisphosphatase 3 (PFKFB3) (Homo sapiens (Human)).